Consider the following 162-residue polypeptide: Large ribosomal subunit protein bL9 (162 aa).

This sequence belongs to the bacterial ribosomal protein bL9 family.

In terms of biological role, binds to the 23S rRNA. In Chlorobaculum parvum (strain DSM 263 / NCIMB 8327) (Chlorobium vibrioforme subsp. thiosulfatophilum), this protein is Large ribosomal subunit protein bL9.